Here is a 359-residue protein sequence, read N- to C-terminus: Endoglucanase 1 (359 aa).

Disordered stretches follow at residues 1 to 26 and 47 to 72; these read MENP…RGGR and TGAS…DAGT. A compositionally biased stretch (basic residues) spans 13 to 24; sequence LRRRRSERRARG. Low complexity predominate over residues 60 to 72; it reads APSADSGTADAGT. The active site involves Asp154. Cysteines 155 and 199 form a disulfide. Asp192 functions as the Proton donor in the catalytic mechanism. The active-site Nucleophile is the Asp339.

This sequence belongs to the glycosyl hydrolase 6 (cellulase B) family.

The enzyme catalyses Endohydrolysis of (1-&gt;4)-beta-D-glucosidic linkages in cellulose, lichenin and cereal beta-D-glucans.. In terms of biological role, CMCase I preferentially hydrolyzes carboxymethyl cellulose (CMC). The protein is Endoglucanase 1 (casA) of Streptomyces sp. (strain KSM-9).